We begin with the raw amino-acid sequence, 233 residues long: Protein YIPF6 (233 aa).

The Cytoplasmic portion of the chain corresponds to 1–84; it reads MAETEGFGDS…PKKSTTLLRD (84 aa). A helical membrane pass occupies residues 85-105; it reads WDLWGPLVLCVSLALMLQGGN. Residues 106-111 are Lumenal-facing; the sequence is ADSKDD. Residues 112 to 132 traverse the membrane as a helical segment; the sequence is GGPQFAEVFVIIWFGAVVITL. The Cytoplasmic portion of the chain corresponds to 133–142; the sequence is NSKLLGGTIS. The helical transmembrane segment at 143 to 163 threads the bilayer; it reads FFQSLCVLGYCILPLTVAMLV. At 164 to 180 the chain is on the lumenal side; that stretch reads CRLVLLLSHTTASFIVR. The helical transmembrane segment at 181 to 201 threads the bilayer; that stretch reads LVVVTVMFAWSTFASTAFLAD. At 202-208 the chain is on the cytoplasmic side; it reads SQPPNRR. Residues 209-229 form a helical membrane-spanning segment; that stretch reads ALAVYPIFLFYFVISWMVLTF. The Lumenal portion of the chain corresponds to 230–233; that stretch reads NTVS.

This sequence belongs to the YIP1 family.

It is found in the golgi apparatus membrane. The sequence is that of Protein YIPF6 (yipf6) from Xenopus tropicalis (Western clawed frog).